A 500-amino-acid chain; its full sequence is UDP-N-acetylmuramoylalanine--D-glutamate ligase (500 aa).

111–117 (GTNGKST) contacts ATP. The region spanning 260–306 (DISFELQHNSESFRQDEFQGEPAEPECIKIREHRQDLQNSLVSSFMH) is the RPE3 insert domain.

The protein belongs to the MurCDEF family.

It is found in the cytoplasm. It catalyses the reaction UDP-N-acetyl-alpha-D-muramoyl-L-alanine + D-glutamate + ATP = UDP-N-acetyl-alpha-D-muramoyl-L-alanyl-D-glutamate + ADP + phosphate + H(+). Its pathway is cell wall biogenesis; peptidoglycan biosynthesis. Its function is as follows. Cell wall formation. Catalyzes the addition of glutamate to the nucleotide precursor UDP-N-acetylmuramoyl-L-alanine (UMA). This Rickettsia conorii (strain ATCC VR-613 / Malish 7) protein is UDP-N-acetylmuramoylalanine--D-glutamate ligase (murD).